Here is a 315-residue protein sequence, read N- to C-terminus: Methionyl-tRNA formyltransferase (315 aa).

Residues 2–189 (SDSLRIIFAG…LITTLKQLAD (188 aa)) are N-terminal domain. Residue 113–116 (SLLP) coordinates (6S)-5,6,7,8-tetrahydrofolate. Residues 210–315 (KEEARIDWSL…EWFIPGNRLA (106 aa)) are C-terminal domain.

The protein belongs to the Fmt family.

The enzyme catalyses L-methionyl-tRNA(fMet) + (6R)-10-formyltetrahydrofolate = N-formyl-L-methionyl-tRNA(fMet) + (6S)-5,6,7,8-tetrahydrofolate + H(+). Attaches a formyl group to the free amino group of methionyl-tRNA(fMet). The formyl group appears to play a dual role in the initiator identity of N-formylmethionyl-tRNA by promoting its recognition by IF2 and preventing the misappropriation of this tRNA by the elongation apparatus. This is Methionyl-tRNA formyltransferase from Salmonella choleraesuis (strain SC-B67).